A 292-amino-acid polypeptide reads, in one-letter code: Alpha-soluble NSF attachment protein (292 aa).

At Ser2 the chain carries N-acetylserine. Lys261 is covalently cross-linked (Glycyl lysine isopeptide (Lys-Gly) (interchain with G-Cter in ubiquitin)).

This sequence belongs to the SNAP family. In terms of assembly, binds to vacuolar cis-SNARE complexes composed of the v-SNAREs NYV1, VTI1 and YKT6, and the t-SNAREs VAM3 and VAM7. Interacts with SEC18.

It localises to the membrane. SNARE complex protein that binds to cis-SNARE complexes on membranes and is required for vesicular transport between the endoplasmic reticulum and the Golgi apparatus and for homotypic vacuole fusion. During the priming step of membrane fusion, is released from cis-SNARE complexes by SEC18 to establish a pool of unpaired SNAREs, which are required for interactions in trans during docking and fusion steps. Can displace HOPS from SNARE complexes, which may be a prerequisite for trans-SNARE complex disassembly and subsequent rounds of priming, docking and fusion. The chain is Alpha-soluble NSF attachment protein (SEC17) from Saccharomyces cerevisiae (strain ATCC 204508 / S288c) (Baker's yeast).